We begin with the raw amino-acid sequence, 45 residues long: Iota-conotoxin-like R11.13 (45 aa).

Disulfide bonds link Cys-5/Cys-19, Cys-12/Cys-22, Cys-18/Cys-27, and Cys-21/Cys-36. Leu-43 is subject to D-leucine. A propeptide (removed by a carboxypeptidase) is located at residue Arg-45.

This sequence belongs to the conotoxin I1 superfamily. As to expression, expressed by the venom duct.

Its subcellular location is the secreted. In terms of biological role, iota-conotoxins bind to voltage-gated sodium channels (Nav) and act as agonists by shifting the voltage-dependence of activation to more hyperpolarized levels. Produces general excitatory symptoms. This chain is Iota-conotoxin-like R11.13, found in Conus radiatus (Rayed cone).